The primary structure comprises 384 residues: Lipid-A-disaccharide synthase (384 aa).

It belongs to the LpxB family.

It catalyses the reaction a lipid X + a UDP-2-N,3-O-bis[(3R)-3-hydroxyacyl]-alpha-D-glucosamine = a lipid A disaccharide + UDP + H(+). The protein operates within bacterial outer membrane biogenesis; LPS lipid A biosynthesis. Its function is as follows. Condensation of UDP-2,3-diacylglucosamine and 2,3-diacylglucosamine-1-phosphate to form lipid A disaccharide, a precursor of lipid A, a phosphorylated glycolipid that anchors the lipopolysaccharide to the outer membrane of the cell. This is Lipid-A-disaccharide synthase (lpxB) from Neisseria meningitidis serogroup A / serotype 4A (strain DSM 15465 / Z2491).